The chain runs to 268 residues: F-actin-capping protein subunit alpha (268 aa).

At S2 the chain carries N-acetylserine. Residue S17 is modified to Phosphoserine.

Belongs to the F-actin-capping protein alpha subunit family. As to quaternary structure, component of the F-actin capping complex, composed of a heterodimer of an alpha and a beta subunit. Interacts with BSP1 (via C-terminus); leading to recruitment of the F-actin capping complex to actin cortical patches and the acomyosin contractile ring.

The protein resides in the cytoplasm. Its subcellular location is the cytoskeleton. It localises to the actin patch. In terms of biological role, F-actin-capping proteins bind in a Ca(2+)-independent manner to the fast growing ends of actin filaments (barbed end) thereby blocking the exchange of subunits at these ends. Unlike other capping proteins (such as gelsolin and severin), these proteins do not sever actin filaments. This chain is F-actin-capping protein subunit alpha (CAP1), found in Saccharomyces cerevisiae (strain ATCC 204508 / S288c) (Baker's yeast).